The sequence spans 60 residues: Beta-defensin 11 (60 aa).

Residues 1–22 (MRLHHLLLALLFLVLSAGSGIS) form the signal peptide. 3 disulfides stabilise this stretch: cysteine 27–cysteine 56, cysteine 34–cysteine 49, and cysteine 39–cysteine 57.

The protein belongs to the beta-defensin family. In terms of tissue distribution, neutrophilic granules.

The protein resides in the secreted. In terms of biological role, has bactericidal activity. Active against E.coli ML35 and S.aureus 502A. In Bos taurus (Bovine), this protein is Beta-defensin 11 (DEFB11).